A 507-amino-acid chain; its full sequence is Pre-glycoprotein polyprotein GP complex (507 aa).

G2 carries N-myristoyl glycine; by host lipidation. Residues 2–17 are Extracellular-facing; sequence GQVVTFLQSLPEVINE. Residues 18–33 form a helical membrane-spanning segment; that stretch reads AINIALIAISIICILK. The Cytoplasmic segment spans residues 34 to 58; that stretch reads GLVNFWKCGVVQLAIFLCLAGRKCD. C57 is a Zn(2+) binding site. Residues 59 to 445 lie on the Extracellular side of the membrane; the sequence is GLMIDRRHEL…QGKTPIALTD (387 aa). Cystine bridges form between C86-C247, C292-C305, C314-C323, and C377-C398. 4 N-linked (GlcNAc...) asparagine; by host glycosylation sites follow: N89, N111, N179, and N240. Residues N378, N386, N403, and N408 are each glycosylated (N-linked (GlcNAc...) asparagine; by host). Residues 446-466 traverse the membrane as a helical segment; it reads ICFWSLVFFTSTVFLQLVGIP. The Cytoplasmic segment spans residues 467-507; that stretch reads THRHLVGEGCPKPHRITSNSLCACGYYKIPKRPTRWVRKGK. The Zn(2+) site is built by H468, H470, C476, H480, C488, and C490.

This sequence belongs to the arenaviridae GPC protein family. Interacts with glycoprotein G2. Part of the GP complex (GP-C) together with glycoprotein G1 and glycoprotein G2. The GP-complex interacts with protein Z, which interacts with ribonucleocapsid; these interactions may induce virion budding. In terms of assembly, homotrimer; disulfide-linked. In pre-fusion state, G1 homotrimers bind G2 homotrimers via ionic interactions. Part of the GP complex (GP-C) together with glycoprotein G2 and the stable signal peptide. The GP-complex interacts with protein Z, which interacts with ribonucleocapsid; these interactions may induce virion budding. As to quaternary structure, homotrimer. Interacts with the stable signal peptide. In pre-fusion state, G2 homotrimers bind G1 homotrimers via ionic interactions. Part of the GP complex (GP-C) together with glycoprotein G1 and the stable signal peptide. Acidification in the endosome triggers rearrangements, which ultimately leads to a 6 helix bundle formed by the two heptad repeat domains (HR1 and HR2) in post-fusion state. The GP-complex interacts with protein Z, which interacts with ribonucleocapsid; these interactions may induce virion budding. Specific enzymatic cleavages in vivo yield mature proteins. GP-C polyprotein is cleaved in the endoplasmic reticulum by the host protease MBTPS1. Only cleaved glycoprotein is incorporated into virions. Post-translationally, the SSP remains stably associated with the GP complex following cleavage by signal peptidase and plays crucial roles in the trafficking of GP through the secretory pathway. In terms of processing, myristoylation is necessary for GP2-mediated fusion activity.

The protein resides in the virion membrane. It is found in the host endoplasmic reticulum membrane. It localises to the host Golgi apparatus membrane. Its subcellular location is the host cell membrane. Functionally, functions as a cleaved signal peptide that is retained as the third component of the GP complex (GP-C). Helps to stabilize the spike complex in its native conformation. The SSP is required for efficient glycoprotein expression, post-translational maturation cleavage of G1 and G2, glycoprotein transport to the cell surface plasma membrane, formation of infectious virus particles, and acid pH-dependent glycoprotein-mediated cell fusion. Its function is as follows. Forms the virion spikes together with glycoprotein G2. The glycoprotein spike trimers are connected to the underlying matrix. Interacts with the host receptor leading to virus endocytosis. Forms the virion spikes together with glycoprotein G1. The glycoprotein spike trimers are connected to the underlying matrix. Class I viral fusion protein that directs fusion of viral and host endosomal membranes, leading to delivery of the nucleocapsid into the cytoplasm. Membrane fusion is mediated by irreversible conformational changes induced by acidification. The sequence is that of Pre-glycoprotein polyprotein GP complex from Allpahuayo mammarenavirus (isolate Rat/Peru/CLHP-2472/1997) (ALLV).